We begin with the raw amino-acid sequence, 162 residues long: Small ribosomal subunit protein uS7m (162 aa).

It belongs to the universal ribosomal protein uS7 family. Part of the small ribosomal subunit.

It is found in the mitochondrion. One of the primary rRNA binding proteins, it binds directly to 16S-like rRNA where it nucleates assembly of the head domain of the small subunit. The chain is Small ribosomal subunit protein uS7m (mrps7) from Dictyostelium citrinum (Slime mold).